The primary structure comprises 831 residues: Protein ADP-ribosyltransferase PARP3 (831 aa).

Residues M1–L69 are disordered. Composition is skewed to basic and acidic residues over residues E15–E32 and K43–E66. A PADR1 zinc-binding domain is found at E49–D199. A zinc ribbon region spans residues G124–P168. The Zn(2+) site is built by C129, C132, C145, and C155. In terms of domain architecture, BRCT spans E200–I290. Residues G338–M439 form the WGR domain. A PARP alpha-helical domain is found at H466 to G585. The 234-residue stretch at D594–V827 folds into the PARP catalytic domain.

The protein belongs to the ARTD/PARP family.

It is found in the nucleus. It carries out the reaction L-aspartyl-[protein] + NAD(+) = 4-O-(ADP-D-ribosyl)-L-aspartyl-[protein] + nicotinamide. The catalysed reaction is L-glutamyl-[protein] + NAD(+) = 5-O-(ADP-D-ribosyl)-L-glutamyl-[protein] + nicotinamide. Its function is as follows. Involved in the base excision repair (BER) pathway, by catalyzing the poly(ADP-ribosyl)ation of a limited number of acceptor proteins involved in chromatin architecture and in DNA metabolism. This modification follows DNA damages and appears as an obligatory step in a detection/signaling pathway leading to the reparation of DNA strand breaks. The chain is Protein ADP-ribosyltransferase PARP3 (PARP3) from Oryza sativa subsp. japonica (Rice).